The primary structure comprises 393 residues: Chorismate synthase (393 aa).

Residues R40 and R46 each contribute to the NADP(+) site. FMN is bound by residues 129-131 (RSS), 249-250 (QA), G301, 316-320 (KPIPT), and R342.

This sequence belongs to the chorismate synthase family. As to quaternary structure, homotetramer. The cofactor is FMNH2.

It catalyses the reaction 5-O-(1-carboxyvinyl)-3-phosphoshikimate = chorismate + phosphate. It participates in metabolic intermediate biosynthesis; chorismate biosynthesis; chorismate from D-erythrose 4-phosphate and phosphoenolpyruvate: step 7/7. Its function is as follows. Catalyzes the anti-1,4-elimination of the C-3 phosphate and the C-6 proR hydrogen from 5-enolpyruvylshikimate-3-phosphate (EPSP) to yield chorismate, which is the branch point compound that serves as the starting substrate for the three terminal pathways of aromatic amino acid biosynthesis. This reaction introduces a second double bond into the aromatic ring system. This is Chorismate synthase from Geotalea uraniireducens (strain Rf4) (Geobacter uraniireducens).